A 370-amino-acid polypeptide reads, in one-letter code: SQLTITDSEVGSSKIYCEVRRGESLWIKEIPDCKGDIVHPTVILTQTSSEEITSSRFATVVCSIIDFHPEAITVNWLKDGHPMESGFVTSPACETNGNFSATSRLTVPAREWFTNTVYTCQVSHQAATQSRNITGSPDSSECNHPAIKLLPPSIEQVLLEATVTLTCVVSNAPYGVNVSWTQEQKPLKSEIAVQPGEDPDSVISTVDISTQAWLSEAVFYCVVSHQDLPTPLRDSIHKEAWKDLREPSVSVLLPPAEEISAERFLSLTCLVRGFSPREIFVKWTVNDKSVNPGNYKNTEVMAENDKSSFFIYSLLSIAAEEWASGASYSCVVGHEAIPLKIINRTVNKSSGKPSFVNISLALLDTVNSCQ.

3 consecutive Ig-like domains span residues 40 to 134, 145 to 237, and 247 to 347; these read PTVI…RNIT, PAIK…DSIH, and PSVS…RTVN. Residues asparagine 98, asparagine 132, asparagine 177, asparagine 343, asparagine 347, and asparagine 357 are each glycosylated (N-linked (GlcNAc...) asparagine).

This chain is Ig heavy chain C region, found in Heterodontus francisci (Horn shark).